The chain runs to 204 residues: Transmembrane protein 253 (204 aa).

Transmembrane regions (helical) follow at residues 33–53, 62–82, 96–116, and 138–158; these read LVLAVSQVWLAIAMVPFTISV, LVTALPLWPGASGLLTGIITL, MMISNTFNLILGFVAVVIEVM, and LSAEAFTLAGVLVSTYALFLL. Positions 184-204 are disordered; the sequence is EEVSGLENGPVVASTGNRTDE.

It localises to the membrane. The sequence is that of Transmembrane protein 253 (Tmem253) from Mus musculus (Mouse).